A 367-amino-acid chain; its full sequence is Probable sugar phosphate/phosphate translocator At1g48230 (367 aa).

The next 10 helical transmembrane spans lie at Leu-9–Tyr-29, Leu-43–Ile-63, Phe-76–Phe-96, Val-106–Val-126, Met-140–Ile-160, Val-163–Leu-183, Val-193–Val-213, Trp-229–Ile-249, Ile-257–Phe-276, and Thr-280–Ile-302. Over residues Ile-321 to Ser-330 the composition is skewed to basic and acidic residues. A disordered region spans residues Ile-321–Leu-341.

The protein belongs to the TPT transporter family. TPT (TC 2.A.7.9) subfamily.

The protein resides in the membrane. This is Probable sugar phosphate/phosphate translocator At1g48230 from Arabidopsis thaliana (Mouse-ear cress).